A 248-amino-acid polypeptide reads, in one-letter code: tRNA (guanine-N(1)-)-methyltransferase (248 aa).

Residues G117 and 137-142 each bind S-adenosyl-L-methionine; that span reads LGDFVL.

This sequence belongs to the RNA methyltransferase TrmD family. In terms of assembly, homodimer.

Its subcellular location is the cytoplasm. It carries out the reaction guanosine(37) in tRNA + S-adenosyl-L-methionine = N(1)-methylguanosine(37) in tRNA + S-adenosyl-L-homocysteine + H(+). Its function is as follows. Specifically methylates guanosine-37 in various tRNAs. In Herminiimonas arsenicoxydans, this protein is tRNA (guanine-N(1)-)-methyltransferase.